The following is a 1151-amino-acid chain: Sterol regulatory element-binding protein 1 (1151 aa).

The segment at 1–59 is transcriptional activation (acidic); sequence MDEPPFTEAALEQALAEPCELDAALLTDIEDMLQLINNQDSDFPGLFDAPYAGVAGGTD. The Cytoplasmic portion of the chain corresponds to 1–487; it reads MDEPPFTEAA…HGRGMLDRSR (487 aa). Residues 27–35 carry the 9aaTAD motif; the sequence is TDIEDMLQL. Disordered regions lie at residues 39-125 and 164-184; these read QDSD…IKEE and GYPSPPGSFSSATPPGSTSQT. The span at 57-69 shows a compositional bias: low complexity; it reads GTDPTSPDASSPG. The span at 91–105 shows a compositional bias: pro residues; it reads TPPPPPVSPTQPAPT. Residues Ser-98 and Ser-117 each carry the phosphoserine modification. Residues 170–184 are compositionally biased toward polar residues; sequence GSFSSATPPGSTSQT. Residues 234-497 form an interaction with LMNA region; it reads QQVPVLLQPH…LALCVLVFLC (264 aa). Positions 324 to 374 constitute a bHLH domain; it reads EKRTAHNAIEKRYRSSINDKIIELKDLVVGTEAKLNKSAVLRKAIDYIRFL. Residues Ser-338 and Ser-339 each carry the phosphoserine; by SIK1 modification. The interval 374–396 is leucine-zipper; the sequence is LQQSNQKLKQENLSLRTAAHKSK. At Ser-397 the chain carries Phosphoserine; by AMPK. Residues 399–479 are disordered; sequence KDLVSCSSGG…KPEQLPAPHG (81 aa). At Ser-403 the chain carries Phosphoserine; by SIK1. Residues 431-448 are compositionally biased toward low complexity; the sequence is DAGSPSQSSPLSLGSRGS. Phosphoserine is present on Ser-457. A helical membrane pass occupies residues 488–508; sequence LALCVLVFLCLSCNPLASLMG. Over 509 to 547 the chain is Lumenal; that stretch reads SWALPGPSDATSAYHGPWRSVLGAEGRDGPGWVLWLLPP. A helical membrane pass occupies residues 548 to 568; the sequence is LVWLTNGLLVLLFLALLFVYG. Over 569–1151 the chain is Cytoplasmic; the sequence is EPVTRPHSDP…LGGGTTVTSS (583 aa). Residues 987–1006 are disordered; the sequence is RQKPPPPSQASQGSSSGAQA. A compositionally biased stretch (low complexity) spans 995–1006; that stretch reads QASQGSSSGAQA. A Phosphoserine modification is found at Ser-1060.

This sequence belongs to the SREBP family. As to quaternary structure, efficient DNA binding of the soluble transcription factor fragment requires dimerization with another bHLH protein. Interacts with CEBPA, the interaction produces a transcriptional synergy. Interacts with LMNA. Forms a tight complex with SCAP, the SCAP-SREBP complex, in the endoplasmic reticulum membrane and the Golgi apparatus. Interacts with PAQR3; the interaction anchors the SCAP-SREBP complex to the Golgi apparatus in low cholesterol conditions. Processed in the Golgi apparatus, releasing the protein from the membrane. At low cholesterol the SCAP-SREBP complex is recruited into COPII vesicles for export from the endoplasmic reticulum. In the Golgi, complex SREBPs are cleaved sequentially by site-1 (MBTPS1, S1P) and site-2 (MBTPS2, S2P) proteases. The first cleavage by site-1 protease occurs within the luminal loop, the second cleavage by site-2 protease occurs within the first transmembrane domain, releasing the transcription factor from the Golgi membrane. Post-translationally, phosphorylated by AMPK, leading to suppress protein processing and nuclear translocation, and repress target gene expression. Phosphorylation at Ser-403 by SIK1 represses activity possibly by inhibiting DNA-binding. In terms of processing, SCAP-free SREBF1 is ubiquitinated by the BCR(ARMC5) complex, leading to its degradation. Ubiquitinated; the nuclear form has a rapid turnover and is rapidly ubiquitinated and degraded by the proteasome in the nucleus.

The protein resides in the endoplasmic reticulum membrane. Its subcellular location is the golgi apparatus membrane. The protein localises to the cytoplasmic vesicle. It is found in the COPII-coated vesicle membrane. It localises to the nucleus. Its activity is regulated as follows. Activation by cleavage is down-regulated upon activation of SIRT3-dependent PRKAA1/AMPK-alpha signaling cascade which leads to inhibition of ATP-consuming lipogenesis to restore cellular energy balance. In terms of biological role, precursor of the transcription factor form (Processed sterol regulatory element-binding protein 1), which is embedded in the endoplasmic reticulum membrane. Low sterol concentrations promote processing of this form, releasing the transcription factor form that translocates into the nucleus and activates transcription of genes involved in cholesterol biosynthesis and lipid homeostasis. Functionally, key transcription factor that regulates expression of genes involved in cholesterol biosynthesis and lipid homeostasis. Binds to the sterol regulatory element 1 (SRE-1) (5'-ATCACCCCAC-3'). Has dual sequence specificity binding to both an E-box motif (5'-ATCACGTGA-3') and to SRE-1 (5'-ATCACCCCAC-3'). Regulates the promoters of genes involved in cholesterol biosynthesis and the LDL receptor (LDLR) pathway of sterol regulation. The chain is Sterol regulatory element-binding protein 1 (SREBF1) from Sus scrofa (Pig).